A 206-amino-acid chain; its full sequence is Max dimerization protein 3 (206 aa).

The interaction with SIN3A and SIN3B stretch occupies residues 8 to 25; the sequence is IQVLLQAAEFLERREREA. Disordered stretches follow at residues 25-67 and 146-171; these read AEHG…ELEK and RERL…QEEL. One can recognise a bHLH domain in the interval 57-109; the sequence is SGRSVHNELEKRRRAQLKRCLERLKQQMPLGADCARYTTLSLLRRARMHIQKL.

As to quaternary structure, efficient DNA binding requires dimerization with another bHLH protein. Binds DNA as a heterodimer with MAX. Interacts with SIN3A AND SIN3B. Interacts with RNF17.

It localises to the nucleus. Functionally, transcriptional repressor. Binds with MAX to form a sequence-specific DNA-binding protein complex which recognizes the core sequence 5'-CAC[GA]TG-3'. Antagonizes MYC transcriptional activity by competing for MAX and suppresses MYC dependent cell transformation. The sequence is that of Max dimerization protein 3 (MXD3) from Homo sapiens (Human).